The chain runs to 121 residues: MASKKVQKIRDKRKARVRAKISGSTERPRLSVFRSSKHIYVQAVADNEGKTIAHSSTISDDVKSKITDVKKVEAAKEVGRSISRKLRDMGIQEVVFDRGSYLYHGRVKALADGAREEGLKF.

Positions 1-19 (MASKKVQKIRDKRKARVRA) are enriched in basic residues. A disordered region spans residues 1-23 (MASKKVQKIRDKRKARVRAKISG).

It belongs to the universal ribosomal protein uL18 family. As to quaternary structure, part of the 50S ribosomal subunit; part of the 5S rRNA/L5/L18/L25 subcomplex. Contacts the 5S and 23S rRNAs.

In terms of biological role, this is one of the proteins that bind and probably mediate the attachment of the 5S RNA into the large ribosomal subunit, where it forms part of the central protuberance. The sequence is that of Large ribosomal subunit protein uL18 from Syntrophus aciditrophicus (strain SB).